The chain runs to 193 residues: Xanthine phosphoribosyltransferase (193 aa).

Positions 20 and 27 each coordinate xanthine. 129 to 133 (ANGKA) is a 5-phospho-alpha-D-ribose 1-diphosphate binding site. Position 157 (Lys-157) interacts with xanthine.

Belongs to the purine/pyrimidine phosphoribosyltransferase family. Xpt subfamily. Homodimer.

It localises to the cytoplasm. The enzyme catalyses XMP + diphosphate = xanthine + 5-phospho-alpha-D-ribose 1-diphosphate. Its pathway is purine metabolism; XMP biosynthesis via salvage pathway; XMP from xanthine: step 1/1. In terms of biological role, converts the preformed base xanthine, a product of nucleic acid breakdown, to xanthosine 5'-monophosphate (XMP), so it can be reused for RNA or DNA synthesis. In Bifidobacterium longum subsp. infantis (strain ATCC 15697 / DSM 20088 / JCM 1222 / NCTC 11817 / S12), this protein is Xanthine phosphoribosyltransferase.